A 185-amino-acid chain; its full sequence is Regulator of rDNA transcription protein 13 (185 aa).

WD repeat units lie at residues 9 to 48, 71 to 108, and 111 to 148; these read GHTDRIYSTIYDHERKRCISASMDTTIRIWDLENIRNNGE, GHRALVGLLGLSDKFLVSASVDGSIRCWDANTYFLKHF, and HTQLNTITALHVSDEVLVSGSEGLLNIYDLNSGLLVRS.

In terms of biological role, may be involved in the modulation of rDNA transcription. This Saccharomyces cerevisiae (strain ATCC 204508 / S288c) (Baker's yeast) protein is Regulator of rDNA transcription protein 13 (RRT13).